We begin with the raw amino-acid sequence, 119 residues long: Ribonuclease P protein component (119 aa).

The protein belongs to the RnpA family. In terms of assembly, consists of a catalytic RNA component (M1 or rnpB) and a protein subunit.

The enzyme catalyses Endonucleolytic cleavage of RNA, removing 5'-extranucleotides from tRNA precursor.. Functionally, RNaseP catalyzes the removal of the 5'-leader sequence from pre-tRNA to produce the mature 5'-terminus. It can also cleave other RNA substrates such as 4.5S RNA. The protein component plays an auxiliary but essential role in vivo by binding to the 5'-leader sequence and broadening the substrate specificity of the ribozyme. The sequence is that of Ribonuclease P protein component from Haemophilus influenzae (strain 86-028NP).